Here is a 93-residue protein sequence, read N- to C-terminus: Head virion protein G6P (93 aa).

2 consecutive transmembrane segments (helical) span residues 25–45 and 56–76; these read GVGI…LNLL and ILDI…GSAL.

The protein belongs to the inovirus G6P protein family. In terms of assembly, interacts with G3P; this interaction is required for proper integration of G3P and G6P into the virion.

It is found in the virion. The protein resides in the host membrane. Plays essential roles both in the entry of the viral genome into the bacterial host and in budding process. The formation of the G3P-G6P complex termed adsorption complex is essential for correct termination of filamentous phage assembly. The polypeptide is Head virion protein G6P (VI) (Pseudomonas phage Pf3 (Bacteriophage Pf3)).